Consider the following 73-residue polypeptide: Putative defensin-like protein 57 (73 aa).

A signal peptide spans 1 to 25 (MRFTSMIFVLVVILINSLFNFNVLA). Disulfide bonds link cysteine 37/cysteine 71, cysteine 41/cysteine 64, cysteine 50/cysteine 69, and cysteine 54/cysteine 70.

It belongs to the DEFL family.

The protein localises to the secreted. The chain is Putative defensin-like protein 57 from Arabidopsis thaliana (Mouse-ear cress).